The following is a 185-amino-acid chain: Ribosome-recycling factor (185 aa).

The protein belongs to the RRF family.

The protein resides in the cytoplasm. In terms of biological role, responsible for the release of ribosomes from messenger RNA at the termination of protein biosynthesis. May increase the efficiency of translation by recycling ribosomes from one round of translation to another. This Pseudomonas paraeruginosa (strain DSM 24068 / PA7) (Pseudomonas aeruginosa (strain PA7)) protein is Ribosome-recycling factor.